The following is a 99-amino-acid chain: Aspartyl/glutamyl-tRNA(Asn/Gln) amidotransferase subunit C (99 aa).

It belongs to the GatC family. In terms of assembly, heterotrimer of A, B and C subunits.

The enzyme catalyses L-glutamyl-tRNA(Gln) + L-glutamine + ATP + H2O = L-glutaminyl-tRNA(Gln) + L-glutamate + ADP + phosphate + H(+). It catalyses the reaction L-aspartyl-tRNA(Asn) + L-glutamine + ATP + H2O = L-asparaginyl-tRNA(Asn) + L-glutamate + ADP + phosphate + 2 H(+). Functionally, allows the formation of correctly charged Asn-tRNA(Asn) or Gln-tRNA(Gln) through the transamidation of misacylated Asp-tRNA(Asn) or Glu-tRNA(Gln) in organisms which lack either or both of asparaginyl-tRNA or glutaminyl-tRNA synthetases. The reaction takes place in the presence of glutamine and ATP through an activated phospho-Asp-tRNA(Asn) or phospho-Glu-tRNA(Gln). This Paraburkholderia phymatum (strain DSM 17167 / CIP 108236 / LMG 21445 / STM815) (Burkholderia phymatum) protein is Aspartyl/glutamyl-tRNA(Asn/Gln) amidotransferase subunit C.